Here is a 114-residue protein sequence, read N- to C-terminus: UPF0339 protein PM0519 (114 aa).

Tandem repeats lie at residues 11 to 59 (AKDG…NFEV) and 62 to 110 (AKND…IKDL).

Belongs to the UPF0339 family. Duplicated subfamily.

The chain is UPF0339 protein PM0519 from Pasteurella multocida (strain Pm70).